The primary structure comprises 274 residues: Probable starch degradation products transport system permease protein AmyC (274 aa).

6 consecutive transmembrane segments (helical) span residues 11–31, 73–93, 103–123, 139–159, 184–204, and 238–258; these read LTFL…IILV, LIIT…TAYA, VIIY…VMIP, LVFM…YGAL, IILP…IMWI, and WNLG…FYFL. The 191-residue stretch at 69-259 folds into the ABC transmembrane type-1 domain; sequence FSNTLIITVF…LPVVIFYFLA (191 aa).

Belongs to the binding-protein-dependent transport system permease family. MalFG subfamily.

The protein localises to the cell membrane. In terms of biological role, probably part of a binding-protein-dependent transport system starch degradation products. Probably responsible for the translocation of the substrate across the membrane. The chain is Probable starch degradation products transport system permease protein AmyC (amyC) from Thermoanaerobacterium thermosulfurigenes (Clostridium thermosulfurogenes).